We begin with the raw amino-acid sequence, 137 residues long: Small heat shock protein IbpA (137 aa).

In terms of domain architecture, sHSP spans 28-137 (TQSNGGYPPY…AMKPRRIEIK (110 aa)).

Belongs to the small heat shock protein (HSP20) family. As to quaternary structure, monomer. Forms homomultimers of about 100-150 subunits at optimal growth temperatures. Conformation changes to monomers at high temperatures or high ionic concentrations.

It is found in the cytoplasm. Functionally, associates with aggregated proteins, together with IbpB, to stabilize and protect them from irreversible denaturation and extensive proteolysis during heat shock and oxidative stress. Aggregated proteins bound to the IbpAB complex are more efficiently refolded and reactivated by the ATP-dependent chaperone systems ClpB and DnaK/DnaJ/GrpE. Its activity is ATP-independent. The protein is Small heat shock protein IbpA of Pectobacterium atrosepticum (strain SCRI 1043 / ATCC BAA-672) (Erwinia carotovora subsp. atroseptica).